The chain runs to 43 residues: uncharacterized protein (43 aa).

The N-terminal stretch at 1 to 22 (MKRKIIAIGIFFRLFIIHIHFS) is a signal peptide.

This is an uncharacterized protein from Schizosaccharomyces pombe (strain 972 / ATCC 24843) (Fission yeast).